A 633-amino-acid polypeptide reads, in one-letter code: Phosphomethylpyrimidine synthase (633 aa).

Residues Asn-245, Met-274, Tyr-303, His-339, 359–361 (SRG), 400–403 (DGLR), and Glu-439 each bind substrate. Zn(2+) is bound at residue His-443. Tyr-466 is a binding site for substrate. His-507 is a Zn(2+) binding site. Residues Cys-587, Cys-590, and Cys-595 each contribute to the [4Fe-4S] cluster site.

The protein belongs to the ThiC family. As to quaternary structure, homodimer. [4Fe-4S] cluster serves as cofactor.

It catalyses the reaction 5-amino-1-(5-phospho-beta-D-ribosyl)imidazole + S-adenosyl-L-methionine = 4-amino-2-methyl-5-(phosphooxymethyl)pyrimidine + CO + 5'-deoxyadenosine + formate + L-methionine + 3 H(+). It functions in the pathway cofactor biosynthesis; thiamine diphosphate biosynthesis. Catalyzes the synthesis of the hydroxymethylpyrimidine phosphate (HMP-P) moiety of thiamine from aminoimidazole ribotide (AIR) in a radical S-adenosyl-L-methionine (SAM)-dependent reaction. The polypeptide is Phosphomethylpyrimidine synthase (Neisseria gonorrhoeae (strain ATCC 700825 / FA 1090)).